The following is a 128-amino-acid chain: Large ribosomal subunit protein uL22 (128 aa).

The protein belongs to the universal ribosomal protein uL22 family. In terms of assembly, part of the 50S ribosomal subunit.

Its function is as follows. This protein binds specifically to 23S rRNA; its binding is stimulated by other ribosomal proteins, e.g. L4, L17, and L20. It is important during the early stages of 50S assembly. It makes multiple contacts with different domains of the 23S rRNA in the assembled 50S subunit and ribosome. In terms of biological role, the globular domain of the protein is located near the polypeptide exit tunnel on the outside of the subunit, while an extended beta-hairpin is found that lines the wall of the exit tunnel in the center of the 70S ribosome. This is Large ribosomal subunit protein uL22 from Prochlorococcus marinus (strain MIT 9515).